Here is a 679-residue protein sequence, read N- to C-terminus: MESVGDPRDGPSTERAFEGQPVPPWTEQVTLRAVVASVALGVALSSVMMNLVFTSGIIPSLNISAGLLGFFLLKAWTRLLDQLGSPGRPFTRQENAVVQTCVVACASMTYSGGFGSYLLAMDRKTAEKTSTGDDSSASVSEPEFGRMMAFFFLVSFVGLLAIVPMRKTMIIRHRLTFPSGSATAHLINSFHTPHGARQAKRQVSLVLRSSLASLFWSIFQWFYTGGPNCGFTSFPTFGLSAFNRGFYISLNGTYVGIGMISPHLINVSMLFGSIISWGIMRPYIRSKRGIWYDADLQETNLKSFSGYKVFCAIAMILGDGIFQLVAISLRTIHTVRHHQVAAETLRSFSDVDAMPRPVMSFDDRRRTQVFLREHIPSTFAISGYVVLATVSTVVIPLMYGQVRYYHVAAAYAFAPVLAFCNAYGTGVAETNFSAQYNKLVILMFASWIGIKNGGIVGSLVICGIVSSIVSTASDFMSDFKTSYLTLTSPRATLVSQVIGTAMGCVVNPAVFTVFHHFYEMNPNKTYQAPLAKIYRGIAVLGAGGLELPKYCLAISATFFVLALAVCAMREVAAHGKWRAEPYIPSVTGMAVSFLLVPAVSIDMCIGSLIVFLWNRNDKLGSQVFGPVLASGLICGDGLFSIPYALLARYDVTPPICIRFLGRVQNDKLDAFLASKAKAG.

A compositionally biased stretch (basic and acidic residues) spans 1–17 (MESVGDPRDGPSTERAF). The interval 1–21 (MESVGDPRDGPSTERAFEGQP) is disordered. 14 helical membrane passes run 29 to 49 (VTLR…SVMM), 51 to 71 (LVFT…LGFF), 101 to 121 (CVVA…LLAM), 144 to 164 (FGRM…AIVP), 211 to 231 (LASL…NCGF), 255 to 275 (VGIG…GSII), 309 to 329 (VFCA…AISL), 379 to 399 (FAIS…PLMY), 407 to 427 (VAAA…GTGV), 441 to 461 (ILMF…SLVI), 497 to 517 (VIGT…FHHF), 547 to 567 (LPKY…AVCA), 593 to 613 (FLLV…VFLW), and 627 to 647 (VLAS…ALLA).

The protein belongs to the YSL (TC 2.A.67.2) family.

Its subcellular location is the membrane. In terms of biological role, may be involved in the transport of nicotianamine-chelated metals. The protein is Probable metal-nicotianamine transporter YSL18 (YSL18) of Oryza sativa subsp. japonica (Rice).